Consider the following 129-residue polypeptide: Protein UL131A (129 aa).

Positions methionine 1–glycine 18 are cleaved as a signal peptide.

Forms the envelope pentamer complex (PC) composed of gH, gL, UL128, UL130, and UL131A. The pentamer interacts with host NRP2. The interaction with gH is important for the formation of UL128, UL130, gH-gL complex.

It is found in the virion membrane. In terms of biological role, plays a role in viral entry into host cells. Forms a pentameric complex at the surface of the viral envelope together with gH, gL, UL130 and UL131. This complex is required for entry in epithelial, endothelial and myeloid host cells. Mechanistically, engages host receptor(s) including neurophilin 2/NRP2 to mediate infection. Contributes to the formation of the complex between UL128, UL130 and gH-gL. The polypeptide is Protein UL131A (UL131A) (Human cytomegalovirus (strain Merlin) (HHV-5)).